The chain runs to 179 residues: MKKSVLTAFITVVCATSSVMAADDNAITDGSVTFNGKVIAPACTLVAATKDSVVTLPDVSATKLQTNGQVSGVQIDVPIELKDCDTTVTKNATFTFNGTADTTQITAFANQASSDAATNVALQMYMNDGTTAITPDTETGNILLQDGDQTLTFKVDYIATGKATSGNVNAVTNFHINYY.

The first 21 residues, 1 to 21, serve as a signal peptide directing secretion; sequence MKKSVLTAFITVVCATSSVMA.

Belongs to the fimbrial protein family.

It is found in the fimbrium. Its function is as follows. Part of the elfADCG-ycbUVF fimbrial operon, which promotes adhesion of bacteria to different abiotic surfaces. ElfA is the major fimbrial subunit produced by this operon. In Escherichia coli (strain K12), this protein is Fimbrial subunit ElfA (elfA).